A 203-amino-acid polypeptide reads, in one-letter code: MSRYTGPSWKQSRRLGFSLTGTGKELARRNYVPGQHGPNNRSKLSEYGLQLAEKQKLRFSYGLSEKQFRNLFVQATKVKGGTLGFNFMILLERRLDNVVYRLGLATTRRQARQFVNHGHILVDGKRVDIPSYRVEVGQVISVREKSAKVPAILEAVEATIGRPAFVSFDAEKLEGSLTRLPERDEINPEINEALVVEFYNKML.

Positions 93-156 (RRLDNVVYRL…AKVPAILEAV (64 aa)) constitute an S4 RNA-binding domain.

It belongs to the universal ribosomal protein uS4 family. Part of the 30S ribosomal subunit. Contacts protein S5. The interaction surface between S4 and S5 is involved in control of translational fidelity.

One of the primary rRNA binding proteins, it binds directly to 16S rRNA where it nucleates assembly of the body of the 30S subunit. Its function is as follows. With S5 and S12 plays an important role in translational accuracy. This is Small ribosomal subunit protein uS4 from Streptococcus thermophilus (strain CNRZ 1066).